A 552-amino-acid chain; its full sequence is L-ascorbate oxidase (552 aa).

Plastocyanin-like domains are found at residues 1 to 122 (SQIR…LIVD) and 134 to 300 (DGEI…NYLP). 3 disulfides stabilise this stretch: Cys19–Cys201, Cys81–Cys538, and Cys180–Cys193. The Cu cation site is built by His60 and His62. The N-linked (GlcNAc...) asparagine glycan is linked to Asn92. 2 residues coordinate Cu cation: His104 and His106. Residues Asn325 and Asn440 are each glycosylated (N-linked (GlcNAc...) asparagine). The 180-residue stretch at 344–523 (NRRIFLLNTQ…HMGMGVVFAE (180 aa)) folds into the Plastocyanin-like 3 domain. Cu cation-binding residues include His445, His448, His450, His506, Cys507, His508, His512, and Met517.

This sequence belongs to the multicopper oxidase family. Dimer. The cofactor is Cu cation.

The protein localises to the secreted. It catalyses the reaction 4 L-ascorbate + O2 = 4 monodehydro-L-ascorbate radical + 2 H2O. In terms of biological role, may be involved in a redox system involving ascorbic acid. This chain is L-ascorbate oxidase, found in Cucurbita pepo var. melopepo (Zucchini).